The sequence spans 294 residues: MEFRQLRYFIAVAEEGNIGAAARRLHISQPPITRQIQALEQDLGVVLFERTHRGVELTAAGTTFLEDARRLLHVTEISRVRSRAASRGEIGELRVAYFGTVVLHTLPLLLRQLLSVAPSATVSLTQMSKNRQIEALDAGTIDIGFGRFYPYQEGVVVRNVTNERLFLGAQKSRARSFGEQVHCSALRNEPFILFPREGRPSFADEVIGVFKNARVEPKVVAIVEDVNAAMALALAGVGVTIVPETVAMISWPDFGFTELVGSKATVPVSCIYRHDHIAPILKTFLNLLPIRESQ.

Residues 1–58 (MEFRQLRYFIAVAEEGNIGAAARRLHISQPPITRQIQALEQDLGVVLFERTHRGVELT) enclose the HTH lysR-type domain. The segment at residues 18–37 (IGAAARRLHISQPPITRQIQ) is a DNA-binding region (H-T-H motif).

The protein belongs to the LysR transcriptional regulatory family.

The protein resides in the cytoplasm. In terms of biological role, involved in regulation of chlorinated catechol metabolism. Transcriptional activator of the clcABD chlorocatechol oxidative operon. The sequence is that of HTH-type transcriptional regulator ClcR (clcR) from Pseudomonas putida (Arthrobacter siderocapsulatus).